A 552-amino-acid chain; its full sequence is Macrophage colony-stimulating factor 1 (552 aa).

The N-terminal stretch at 1–32 is a signal peptide; the sequence is MTARGAAGRCPSSTWLGSRLLLVCLLMSRSIA. The Extracellular portion of the chain corresponds to 33–492; the sequence is KEVSEHCSHM…EGSSDPQIPE (460 aa). 3 disulfides stabilise this stretch: C39-C122, C80-C171, and C134-C178. N107, N154, and N172 each carry an N-linked (GlcNAc...) asparagine glycan. Residues 197-207 show a composition bias toward low complexity; it reads TPSSDPASASP. The segment at 197 to 293 is disordered; that stretch reads TPSSDPASAS…GGPVPGVEDI (97 aa). The segment covering 254–267 has biased composition (polar residues); the sequence is PRSTCQTLESTEQP. Residues 268-278 are compositionally biased toward basic and acidic residues; it reads NHGDRLTEDSQ. S308 is a glycosylation site (O-linked (Xyl...) (chondroitin sulfate) serine). 2 disordered regions span residues 321–412 and 439–465; these read KFSP…RVSN and GKRS…ARPV. Composition is skewed to basic and acidic residues over residues 350–364, 382–396, and 439–450; these read STED…DRPL, EKTD…DHQE, and GKRSTRDRRSPA. The O-linked (GalNAc...) threonine glycan is linked to T360. Residues 493 to 515 traverse the membrane as a helical segment; it reads SVFHLLVPGIILVLLTVGGLLFY. The Cytoplasmic portion of the chain corresponds to 516-552; it reads KWKWRSHRDPQTLDSSVGRPEDSSLTQDEDRQVELPV. The interval 525–552 is disordered; sequence PQTLDSSVGRPEDSSLTQDEDRQVELPV. Residues 543-552 show a composition bias toward basic and acidic residues; sequence DEDRQVELPV.

In terms of assembly, homodimer or heterodimer; disulfide-linked. Likely to exist in multiple forms: homodimer consisting of 2 identical 150-200 kDa proteoglycan subunits, heterodimer consisting of a 150-200 kDa proteoglycan subunit and a truncated 43 kDa subunit, and homodimer consisting of 2 identical 43 kDa subunits. Interacts with CSF1R. N-glycosylated. In terms of processing, O-glycosylated; contains chondroitin sulfate.

The protein localises to the cell membrane. Its subcellular location is the secreted. It localises to the extracellular space. Its function is as follows. Cytokine that plays an essential role in the regulation of survival, proliferation and differentiation of hematopoietic precursor cells, especially mononuclear phagocytes, such as macrophages and monocytes. Promotes the release of pro-inflammatory chemokines, and thereby plays an important role in innate immunity and in inflammatory processes. Plays an important role in the regulation of osteoclast proliferation and differentiation, the regulation of bone resorption, and is required for normal bone development. Required for normal male and female fertility. Promotes reorganization of the actin cytoskeleton, regulates formation of membrane ruffles, cell adhesion and cell migration. Plays a role in lipoprotein clearance. This chain is Macrophage colony-stimulating factor 1 (Csf1), found in Mus musculus (Mouse).